Consider the following 545-residue polypeptide: Threonine--tRNA ligase catalytic subunit (545 aa).

Residues 139 to 433 (DHRLIGEKLD…LLEHFKGKLP (295 aa)) form a catalytic region. Residues cysteine 231, histidine 282, and histidine 410 each coordinate Zn(2+).

The protein belongs to the class-II aminoacyl-tRNA synthetase family. In terms of assembly, homodimer. Probably interacts with its editing subunit. Requires Zn(2+) as cofactor.

The protein localises to the cytoplasm. The enzyme catalyses tRNA(Thr) + L-threonine + ATP = L-threonyl-tRNA(Thr) + AMP + diphosphate + H(+). Catalyzes the attachment of threonine to tRNA(Thr) in a two-step reaction: L-threonine is first activated by ATP to form Thr-AMP and then transferred to the acceptor end of tRNA(Thr). Also activates L-serine and transfers it to tRNA(Thr) but cannot deacylate incorrectly charged amino acid; unlike most archaea the editing function is found in a freestanding protein. In Saccharolobus islandicus (strain L.S.2.15 / Lassen #1) (Sulfolobus islandicus), this protein is Threonine--tRNA ligase catalytic subunit.